The following is a 164-amino-acid chain: UPF0304 protein YfbU (164 aa).

Belongs to the UPF0304 family.

The sequence is that of UPF0304 protein YfbU from Salmonella enteritidis PT4 (strain P125109).